The chain runs to 106 residues: Phosphoribosyl-ATP pyrophosphatase (106 aa).

Belongs to the PRA-PH family.

The protein resides in the cytoplasm. The enzyme catalyses 1-(5-phospho-beta-D-ribosyl)-ATP + H2O = 1-(5-phospho-beta-D-ribosyl)-5'-AMP + diphosphate + H(+). It participates in amino-acid biosynthesis; L-histidine biosynthesis; L-histidine from 5-phospho-alpha-D-ribose 1-diphosphate: step 2/9. The polypeptide is Phosphoribosyl-ATP pyrophosphatase (Geotalea daltonii (strain DSM 22248 / JCM 15807 / FRC-32) (Geobacter daltonii)).